The chain runs to 994 residues: Phosphoenolpyruvate carboxylase (994 aa).

A disordered region spans residues 1–66 (MKSSGSARAT…QGRTREDKDR (66 aa)). Low complexity-rich tracts occupy residues 14-25 (AVSSSSAPAHAE) and 41-54 (AAAR…AASA). Catalysis depends on residues His204 and Lys646.

This sequence belongs to the PEPCase type 1 family. Mg(2+) is required as a cofactor.

It carries out the reaction oxaloacetate + phosphate = phosphoenolpyruvate + hydrogencarbonate. Forms oxaloacetate, a four-carbon dicarboxylic acid source for the tricarboxylic acid cycle. The protein is Phosphoenolpyruvate carboxylase of Burkholderia pseudomallei (strain 668).